The following is a 320-amino-acid chain: 4-diphosphocytidyl-2-C-methyl-D-erythritol kinase (320 aa).

Residue lysine 20 is part of the active site. Position 112 to 122 (112 to 122 (PVAGGMGGGSA)) interacts with ATP. Aspartate 154 is an active-site residue.

This sequence belongs to the GHMP kinase family. IspE subfamily.

The catalysed reaction is 4-CDP-2-C-methyl-D-erythritol + ATP = 4-CDP-2-C-methyl-D-erythritol 2-phosphate + ADP + H(+). Its pathway is isoprenoid biosynthesis; isopentenyl diphosphate biosynthesis via DXP pathway; isopentenyl diphosphate from 1-deoxy-D-xylulose 5-phosphate: step 3/6. In terms of biological role, catalyzes the phosphorylation of the position 2 hydroxy group of 4-diphosphocytidyl-2C-methyl-D-erythritol. This Pseudarthrobacter chlorophenolicus (strain ATCC 700700 / DSM 12829 / CIP 107037 / JCM 12360 / KCTC 9906 / NCIMB 13794 / A6) (Arthrobacter chlorophenolicus) protein is 4-diphosphocytidyl-2-C-methyl-D-erythritol kinase.